We begin with the raw amino-acid sequence, 479 residues long: Ankyrin repeat, SAM and basic leucine zipper domain-containing protein 1 (479 aa).

A phosphoserine mark is found at S22 and S24. ANK repeat units lie at residues 49–78 (EKNE…SVDS), 82–111 (YGWT…NASF), 114–148 (DKQT…DPNV), 152–181 (RLMT…EVNT), 185–214 (NGYT…NKML), and 218–247 (DGKT…PLEG). Residues 276–338 (SYTALGDLEI…KILDALKELQ (63 aa)) form the SAM domain.

Interacts with DDX4, PIWIL1, RANBP9 and TDRD1.

It localises to the cytoplasm. In terms of biological role, plays a central role during spermatogenesis by repressing transposable elements and preventing their mobilization, which is essential for the germline integrity. Acts via the piRNA metabolic process, which mediates the repression of transposable elements during meiosis by forming complexes composed of piRNAs and Piwi proteins and governs the methylation and subsequent repression of transposons. Its association with pi-bodies suggests a participation in the primary piRNAs metabolic process. Required prior to the pachytene stage to facilitate the production of multiple types of piRNAs, including those associated with repeats involved in the regulation of retrotransposons. May act by mediating protein-protein interactions during germ cell maturation. The protein is Ankyrin repeat, SAM and basic leucine zipper domain-containing protein 1 (ASZ1) of Rhinolophus ferrumequinum (Greater horseshoe bat).